The primary structure comprises 217 residues: Regulator of G-protein signaling 19 (217 aa).

Positions 1 to 29 are disordered; the sequence is MPTPHEAEKQITGPEEADRPPSMSSHDTA. Residues Ser24 and Ser97 each carry the phosphoserine modification. In terms of domain architecture, RGS spans 90–206; it reads SFDKLMHSPA…LSSPTYRALL (117 aa). Ser151 is subject to Phosphoserine; by MAPK1 and MAPK3. The tract at residues 207-217 is interaction with GIPC; it reads LQGPSQSSSEA.

As to quaternary structure, interacts with GIPC PDZ domain. Interacts with GNAO1. In terms of processing, fatty acylated. Heavily palmitoylated in the cysteine string motif. Phosphorylated, mainly on serine residues. In terms of tissue distribution, highest expression in lung. Placenta, liver and heart also express high levels of GAIP.

The protein resides in the membrane. Functionally, inhibits signal transduction by increasing the GTPase activity of G protein alpha subunits thereby driving them into their inactive GDP-bound form. Binds to G-alpha subfamily 1 members, with the order G(i)a3 &gt; G(i)a1 &gt; G(o)a &gt;&gt; G(z)a/G(i)a2. Activity on G(z)-alpha is inhibited by phosphorylation and palmitoylation of the G-protein. The protein is Regulator of G-protein signaling 19 (RGS19) of Homo sapiens (Human).